A 66-amino-acid polypeptide reads, in one-letter code: MAFLKKSLFLVLFLGLVSLSICDEEKRQDEDDDDDDDEEKRGVFDIIKGAGKQLIAHAMGKIAEKV.

Positions Met-1–Cys-22 are cleaved as a signal peptide. A propeptide spanning residues Asp-23–Glu-39 is cleaved from the precursor. Val-66 carries the post-translational modification Valine amide.

Expressed by the skin glands.

The protein resides in the secreted. Functionally, has antibacterial activity against Gram-negative bacteria E.coli ATCC 25922 (MIC=80 uM), K.pneumoniae ATCC 700603 (MIC=310 uM) and S.choleraesuis ATCC 14028 (MIC=310 uM). Shows no hemolytic activity and no cytotoxicity. This chain is Ocellatin-PT4, found in Leptodactylus pustulatus (Ceara white-lipped frog).